A 1109-amino-acid chain; its full sequence is Carbamoyl phosphate synthase large chain (1109 aa).

Positions 1–402 (MPKRTDLKSV…ALQKALRSLE (402 aa)) are carboxyphosphate synthetic domain. Positions 129, 169, 175, 176, 208, 210, 215, 241, 242, 243, 285, and 299 each coordinate ATP. Positions 133 to 328 (KGVVERCGAE…IAKIATKLSL (196 aa)) constitute an ATP-grasp 1 domain. Mg(2+)-binding residues include Q285, E299, and N301. Mn(2+) contacts are provided by Q285, E299, and N301. An oligomerization domain region spans residues 403-546 (QKGSQLDFSS…YHYSAYDEED (144 aa)). Residues 547–950 (EVALHSKPSI…AFAKSQAGAN (404 aa)) are carbamoyl phosphate synthetic domain. In terms of domain architecture, ATP-grasp 2 spans 677 to 868 (SRVLDKAGLV…MAKAAALIGT (192 aa)). R713, R752, L754, E759, G784, I785, H786, S787, Q827, and E839 together coordinate ATP. Q827, E839, and N841 together coordinate Mg(2+). Residues Q827, E839, and N841 each coordinate Mn(2+). One can recognise an MGS-like domain in the interval 951 to 1096 (NALPTEGKVF…QEHAAALGES (146 aa)). The interval 951-1109 (NALPTEGKVF…AAAKADLQHA (159 aa)) is allosteric domain.

It belongs to the CarB family. In terms of assembly, composed of two chains; the small (or glutamine) chain promotes the hydrolysis of glutamine to ammonia, which is used by the large (or ammonia) chain to synthesize carbamoyl phosphate. Tetramer of heterodimers (alpha,beta)4. It depends on Mg(2+) as a cofactor. The cofactor is Mn(2+).

The enzyme catalyses hydrogencarbonate + L-glutamine + 2 ATP + H2O = carbamoyl phosphate + L-glutamate + 2 ADP + phosphate + 2 H(+). It catalyses the reaction hydrogencarbonate + NH4(+) + 2 ATP = carbamoyl phosphate + 2 ADP + phosphate + 2 H(+). Its pathway is amino-acid biosynthesis; L-arginine biosynthesis; carbamoyl phosphate from bicarbonate: step 1/1. The protein operates within pyrimidine metabolism; UMP biosynthesis via de novo pathway; (S)-dihydroorotate from bicarbonate: step 1/3. Its function is as follows. Large subunit of the glutamine-dependent carbamoyl phosphate synthetase (CPSase). CPSase catalyzes the formation of carbamoyl phosphate from the ammonia moiety of glutamine, carbonate, and phosphate donated by ATP, constituting the first step of 2 biosynthetic pathways, one leading to arginine and/or urea and the other to pyrimidine nucleotides. The large subunit (synthetase) binds the substrates ammonia (free or transferred from glutamine from the small subunit), hydrogencarbonate and ATP and carries out an ATP-coupled ligase reaction, activating hydrogencarbonate by forming carboxy phosphate which reacts with ammonia to form carbamoyl phosphate. The sequence is that of Carbamoyl phosphate synthase large chain from Pseudarthrobacter chlorophenolicus (strain ATCC 700700 / DSM 12829 / CIP 107037 / JCM 12360 / KCTC 9906 / NCIMB 13794 / A6) (Arthrobacter chlorophenolicus).